Reading from the N-terminus, the 258-residue chain is MLAKRIIPCLDVRDGQVVKGVQFRNHEIIGDIVPLAKRYADEGADELVFYDITASSDGRVVDKSWVSRVAEVIDIPFCVAGGIKSLEDAAQILSFGADKISINSPALADPTLITRLADRFGVQCIVVGIDTWFDAETGKYHVNQYTGDETRTRVTQWETLDWVEEVQKRGAGEIVLNMMNQDGVRNGYDLQQLAKVRAVCHVPLIASGGAGTMEHFLEAFRDANVDGALAASVFHKQIINIGELKAYLAAQGVEIRVC.

Catalysis depends on residues Asp11 and Asp130.

It belongs to the HisA/HisF family. As to quaternary structure, heterodimer of HisH and HisF.

It localises to the cytoplasm. It catalyses the reaction 5-[(5-phospho-1-deoxy-D-ribulos-1-ylimino)methylamino]-1-(5-phospho-beta-D-ribosyl)imidazole-4-carboxamide + L-glutamine = D-erythro-1-(imidazol-4-yl)glycerol 3-phosphate + 5-amino-1-(5-phospho-beta-D-ribosyl)imidazole-4-carboxamide + L-glutamate + H(+). It participates in amino-acid biosynthesis; L-histidine biosynthesis; L-histidine from 5-phospho-alpha-D-ribose 1-diphosphate: step 5/9. IGPS catalyzes the conversion of PRFAR and glutamine to IGP, AICAR and glutamate. The HisF subunit catalyzes the cyclization activity that produces IGP and AICAR from PRFAR using the ammonia provided by the HisH subunit. The chain is Imidazole glycerol phosphate synthase subunit HisF from Klebsiella pneumoniae (strain 342).